We begin with the raw amino-acid sequence, 304 residues long: Protein Largen (304 aa).

A compositionally biased stretch (low complexity) spans 1-22; the sequence is MSAKSKGNPSSSSAAEGPPAAS. 4 disordered regions span residues 1-27, 66-109, 114-133, and 236-304; these read MSAK…TKVK, QLED…PPAH, LTVL…TPVR, and EPVH…TTTV. Residues 33–70 adopt a coiled-coil conformation; that stretch reads IVEDLELVLGDLKDVAKELKEVVDQIDTLTSDLQLEDE. The segment covering 77–91 has biased composition (low complexity); it reads TDTLNSSSSGTTASS. Pro residues-rich tracts occupy residues 120-129 and 275-289; these read PNPPPPPPRL and FPPP…PAAP.

Functionally, regulator of cell size that promotes cell size increase independently of mTOR and Hippo signaling pathways. Acts by stimulating the translation of specific mRNAs, including those encoding proteins affecting mitochondrial functions. Increases mitochondrial mass and respiration. This is Protein Largen (Prr16) from Mus musculus (Mouse).